A 1217-amino-acid polypeptide reads, in one-letter code: MAAGRAQVPSSEQAWLEDAQVFIQKTLCPAVKEPNVQLTPLVIDCVKTVWLSQGRNQGSTLPLSYSFVSVQDLKTHQRLPCCSHLSWSSSAYQAWAQEAGPNGNPLPREQLLLLGTLTDLSADLEQECRNGSLYVRDNTGVLSCELIDLDLSWLGHLFLFPRWSYLPPARWNSSGEGHLELWDAPVPVFPLTISPGPVTPIPVLYPESASCLLRLRNKLRGVQRNLAGSLVRLSALVKSKQKAYFILSLGRSHPAVTHVSIIVQVPAQLVWHRALRPGTAYVLTELRVSKIRGQRQHVWMTSQSSRLLLLKPECVQELELELEGPLLEADPKPLPMPSNSEDKKDPESLVRYSRLLSYSGAVTGVLNEPAGLYELDGQLGLCLAYQQFRGLRRVMRPGVCLQLQDVHLLQSVGGGTRRPVLAPCLRGAVLLQSFSRQKPGAHSSRQAYGASLYEQLVWERQLGLPLYLWATKALEELACKLCPHVLRHHQFLQHSSPGSPSLGLQLLAPTLDLLAPPGSPVRNAHNEILEEPHHCPLQKYTRLQTPSSFPTLATLKEEGQRKAWASFDPKALLPLPEASYLPSCQLNRRLAWSWLCLLPSAFCPAQVLLGVLVASSHKGCLQLRDQSGSLPCLLLAKHSQPLSDPRLIGCLVRAERFQLIVERDVRSSFPSWKELSMPGFIQKQQARVYVQFFLADALILPVPRPCLHSATPSTPQTDPTGPEGPHLGQSRLFLLCHKEALMKRNFCVPPGASPEVPKPALSFYVLGSWLGGTQRKEGTGWGLPEPQGNDDNDQKVHLIFFGSSVRWFEFLHPGQVYRLIAPGPATPMLFEKDGSSCISRRPLELAGCASCLTVQDNWTLELESSQDIQDVLDANKSLPESSLTDLLSDNFTDSLVSFSAEILSRTLCEPLVASLWMKLGNTGAMRRCVKLTVALETAECEFPPHLDVYIEDPHLPPSLGLLPGARVHFSQLEKRVSRSHNVYCCFRSSTYVQVLSFPPETTISIPLPHIYLAELLQGGQSPFQATASCHIVSVFSLQLFWVCAYCTSICRQGKCTRLGSTCPTQTAISQAIIRLLVEDGTAEAVVTCRNHHVAAALGLCPREWASLLDFVQVPGRVVLQFAGPGAQLESSARVDEPMTMFLWTLCTSPSVLRPIVLSFELERKPSKIVPLEPPRLQRFQCGELPFLTHVNPRLRLSCLSIRESEYSSSLGILASSC.

The segment at 328–347 is disordered; that stretch reads EADPKPLPMPSNSEDKKDPE.

The protein belongs to the CTC1 family. Component of the CST complex, composed of TEN1/C17orf106, CTC1/C17orf68 and STN1; in the complex interacts directly with STN1. Interacts with ACD and POT1.

The protein resides in the nucleus. The protein localises to the chromosome. Its subcellular location is the telomere. Component of the CST complex proposed to act as a specialized replication factor promoting DNA replication under conditions of replication stress or natural replication barriers such as the telomere duplex. The CST complex binds single-stranded DNA with high affinity in a sequence-independent manner, while isolated subunits bind DNA with low affinity by themselves. Initially the CST complex has been proposed to protect telomeres from DNA degradation. However, the CST complex has been shown to be involved in several aspects of telomere replication. The CST complex inhibits telomerase and is involved in telomere length homeostasis; it is proposed to bind to newly telomerase-synthesized 3' overhangs and to terminate telomerase action implicating the association with the ACD:POT1 complex thus interfering with its telomerase stimulation activity. The CST complex is also proposed to be involved in fill-in synthesis of the telomeric C-strand probably implicating recruitment and activation of DNA polymerase alpha. The CST complex facilitates recovery from many forms of exogenous DNA damage; seems to be involved in the re-initiation of DNA replication at repaired forks and/or dormant origins. Involved in telomere maintenance. Involved in genome stability. May be in involved in telomeric C-strand fill-in during late S/G2 phase. This is CST complex subunit CTC1 (CTC1) from Homo sapiens (Human).